A 379-amino-acid chain; its full sequence is Phospholipase A1 (379 aa).

Residues 1 to 20 form the signal peptide; that stretch reads MKFITAILVIFCVYLLSTAG. Residues 21-73 constitute a propeptide that is removed on maturation; it reads DSKILPLKKLPSKIFGHLKSHVDNTVKKPLKVFGHLKSHVENSVGPLRMNKLT. C76 and C154 form a disulfide bridge. N-linked (GlcNAc...) asparagine glycosylation occurs at N126. S204 (nucleophile) is an active-site residue. D232 serves as the catalytic Charge relay system. 2 disulfides stabilise this stretch: C243–C248 and C285–C291. Catalysis depends on H293, which acts as the Charge relay system.

It belongs to the AB hydrolase superfamily. Lipase family. Post-translationally, contains five disulfide bonds. In terms of tissue distribution, expressed by the venom gland.

It localises to the secreted. The catalysed reaction is a 1,2-diacyl-sn-glycero-3-phosphocholine + H2O = a 2-acyl-sn-glycero-3-phosphocholine + a fatty acid + H(+). Its function is as follows. Catalyzes the hydrolysis of phosphatidylcholine with phospholipase A1 activity. May act as an allergen and induce hemolytic activity. This chain is Phospholipase A1, found in Dinoponera quadriceps (South American ant).